The chain runs to 28 residues: Venom protein (28 aa).

A disordered region spans residues 1–28 (KEGYPDGQNGKKIPCAINDNISKTXEQA). The segment covering 19–28 (DNISKTXEQA) has biased composition (polar residues).

Expressed by the venom gland.

Its subcellular location is the secreted. In terms of biological role, causes symptoms of mild intoxication and transient paralysis in insects (A.domestica). The protein is Venom protein of Rhopalurus junceus (Caribbean blue scorpion).